Consider the following 276-residue polypeptide: Mediator of RNA polymerase II transcription subunit 7 (276 aa).

2 stretches are compositionally biased toward basic and acidic residues: residues 1–11 (MADADAQRQAE) and 234–263 (FGRE…RDAQ). 2 disordered regions span residues 1-27 (MADA…PPPF) and 234-276 (FGRE…MLSQ).

Belongs to the Mediator complex subunit 7 family. As to quaternary structure, component of the Mediator complex.

The protein resides in the nucleus. Functionally, component of the Mediator complex, a coactivator involved in the regulated transcription of nearly all RNA polymerase II-dependent genes. Mediator functions as a bridge to convey information from gene-specific regulatory proteins to the basal RNA polymerase II transcription machinery. Mediator is recruited to promoters by direct interactions with regulatory proteins and serves as a scaffold for the assembly of a functional preinitiation complex with RNA polymerase II and the general transcription factors. The sequence is that of Mediator of RNA polymerase II transcription subunit 7 (MED7) from Phaeosphaeria nodorum (strain SN15 / ATCC MYA-4574 / FGSC 10173) (Glume blotch fungus).